A 184-amino-acid chain; its full sequence is uncharacterized protein (184 aa).

Residues 1–20 (MYQLEKIWVLLCLALVGVLG) form the signal peptide.

This is an uncharacterized protein from Drosophila melanogaster (Fruit fly).